Consider the following 452-residue polypeptide: Glycoprotein endo-alpha-1,2-mannosidase-like protein (452 aa).

Over 1-8 (MARRRRRA) the chain is Cytoplasmic. The helical; Signal-anchor for type II membrane protein transmembrane segment at 9–29 (CIALFLVLLFAFGTLMGLRTL) threads the bilayer. Residues 30–452 (KAPDGLPALG…FIKEKEQWLM (423 aa)) are Lumenal-facing. Positions 40 to 90 (PGPELAPFERRPEGNPAPARAPAAPAAPPPPPPRTAAPRASLGPAEADPAP) are disordered. The segment covering 64–74 (PAAPPPPPPRT) has biased composition (pro residues).

This sequence belongs to the glycosyl hydrolase 99 family.

Its subcellular location is the golgi apparatus membrane. The protein is Glycoprotein endo-alpha-1,2-mannosidase-like protein (Maneal) of Mus musculus (Mouse).